Consider the following 118-residue polypeptide: Urease subunit beta (118 aa).

It belongs to the urease beta subunit family. In terms of assembly, heterotrimer of UreA (gamma), UreB (beta) and UreC (alpha) subunits. Three heterotrimers associate to form the active enzyme.

It localises to the cytoplasm. It carries out the reaction urea + 2 H2O + H(+) = hydrogencarbonate + 2 NH4(+). It functions in the pathway nitrogen metabolism; urea degradation; CO(2) and NH(3) from urea (urease route): step 1/1. In Aliivibrio fischeri (strain ATCC 700601 / ES114) (Vibrio fischeri), this protein is Urease subunit beta.